Here is a 441-residue protein sequence, read N- to C-terminus: MAISSLSSPSGARVSSVTVKNKVLKTPCFFLPTSRGTVPHLTPDNVEEFDIPALYVGLEDCLDRLEASPILTNEGTIKKWIAAPSVQPTLLAPRRTSPLPSVSAGQSHINIVTASGAKKLTNDLYIKAVLKLCPELVIPLNDTPTSPPGVKRKPKIVERSVNWTTELLLALKATDAFNTTKVFFPVPDLDTQYLTPIFQFFQENQLANNIAGLAFSNNVNPLPADLVGLPRLSIQKFESPLEILKCIQRGIDIIVPDMITQATDAGVALTFSFPPPSKDVLNSKIELGLDMWDERFATDMEPLQSGCVCKTCRRYKRAYVRHLLQARELVAWILLQLHNVYAFTAFFQGIRASIQEGNFDEDVRKFEEIYMTSFPASHGFGPRKRGYQMDLTNVQPVENKPAWISMKSPLEKEIANEYEALKVTERKEDTQDYNEPELHNR.

The Zn(2+) site is built by C307, C309, C312, and H338.

Belongs to the queuine tRNA-ribosyltransferase family. QTRT2 subfamily. Heterodimer of a catalytic subunit and an accessory subunit. Zn(2+) is required as a cofactor.

It localises to the cytoplasm. In terms of biological role, non-catalytic subunit of the queuine tRNA-ribosyltransferase (TGT) that catalyzes the base-exchange of a guanine (G) residue with queuine (Q) at position 34 (anticodon wobble position) in tRNAs with GU(N) anticodons (tRNA-Asp, -Asn, -His and -Tyr), resulting in the hypermodified nucleoside queuosine (7-(((4,5-cis-dihydroxy-2-cyclopenten-1-yl)amino)methyl)-7-deazaguanosine). This Schizosaccharomyces pombe (strain 972 / ATCC 24843) (Fission yeast) protein is Queuine tRNA-ribosyltransferase accessory subunit 2 (qtr2).